The primary structure comprises 501 residues: MTLASPRVSNSKTTVLLFPRKVSSIAFAIGGLTSFVIFASLLLFTYPIGSSVTDYFYRTETTQNVQFHHSIHDPDRNPSPVSSSESPPVLTQDSDDKVLPKGSHDSNDVRLGEETNSGKSSNVSIDEEATQDHVETECDLYHGNWFYDPMGPLYTNNSCPLLTQMQNCQGNGRPDKGYENWRWKPSQCDLPRFDAKKFLELMRGKTLAFIGDSVARNQMESMMCLLWQVETPVNRGNRKMQRWYFRSSSVMIARMWSSWLVHQFNEPFGFATDGVTKLKLDQPDERIIEALPNFDVVVLSSGHWFAKQSVYILNDQIVGGQLWWPDKSKPEKINNVEAFGISVETIIKAMAKHPNYTGLTILRTWSPDHYEGGAWNTGGSCTGKVEPLPPGNLVTNGFTEIMHEKQATGFHRAVADDKLGNRSKKLKLMDITEAFGYRHDGHPGPYRSPDPKKITKRGPDGQPPPQDCLHWCMPGPVDTWNEMVLEIIRRDFEGRQSSPSS.

A helical; Signal-anchor for type II membrane protein membrane pass occupies residues 25–45 (IAFAIGGLTSFVIFASLLLFT). A disordered region spans residues 69–131 (HSIHDPDRNP…NVSIDEEATQ (63 aa)). A compositionally biased stretch (low complexity) spans 78–89 (PSPVSSSESPPV). A compositionally biased stretch (basic and acidic residues) spans 94–113 (SDDKVLPKGSHDSNDVRLGE). The span at 114-124 (ETNSGKSSNVS) shows a compositional bias: polar residues. Positions 211–213 (GDS) match the GDS motif motif. A disordered region spans residues 438–467 (RHDGHPGPYRSPDPKKITKRGPDGQPPPQD). Residues 449 to 459 (PDPKKITKRGP) show a composition bias toward basic and acidic residues. A DCXHWCLPGXXDXWN motif motif is present at residues 467–481 (DCLHWCMPGPVDTWN).

Belongs to the PC-esterase family. TBL subfamily. In terms of tissue distribution, expressed in roots, cauline leaves and flowers.

It is found in the membrane. May act as a bridging protein that binds pectin and other cell wall polysaccharides. Probably involved in maintaining esterification of pectins. May be involved in the specific O-acetylation of cell wall polymers. The polypeptide is Protein YLS7 (YLS7) (Arabidopsis thaliana (Mouse-ear cress)).